The following is a 286-amino-acid chain: Phosphatidylglycerol--prolipoprotein diacylglyceryl transferase (286 aa).

The next 7 helical transmembrane spans lie at I24–W44, F72–Y92, I104–A124, F140–I160, L190–S210, R218–F238, and W253–A273. Residue R155 coordinates a 1,2-diacyl-sn-glycero-3-phospho-(1'-sn-glycerol).

Belongs to the Lgt family.

It localises to the cell inner membrane. It carries out the reaction L-cysteinyl-[prolipoprotein] + a 1,2-diacyl-sn-glycero-3-phospho-(1'-sn-glycerol) = an S-1,2-diacyl-sn-glyceryl-L-cysteinyl-[prolipoprotein] + sn-glycerol 1-phosphate + H(+). The protein operates within protein modification; lipoprotein biosynthesis (diacylglyceryl transfer). In terms of biological role, catalyzes the transfer of the diacylglyceryl group from phosphatidylglycerol to the sulfhydryl group of the N-terminal cysteine of a prolipoprotein, the first step in the formation of mature lipoproteins. The polypeptide is Phosphatidylglycerol--prolipoprotein diacylglyceryl transferase (Mesorhizobium japonicum (strain LMG 29417 / CECT 9101 / MAFF 303099) (Mesorhizobium loti (strain MAFF 303099))).